A 292-amino-acid polypeptide reads, in one-letter code: MPWLQVRLAISPEQAETYEDALLEVGAVSVTFMDAEDQPIFEPDLNTTPLWSHTHLLALFEADADPEQVFAHLRLLTGAELPEHQAEVIEDQDWERSWMDNFQPMRFGRRLWIVPSWHEAPEKDAVNLLLDPGLAFGTGTHPTTALCLEWLDGQQLEGTQVLDFGCGSGILAIAALLLGAREAVGTDIDVQAIEASRDNAQRNGVADEKLALYLPEHMPAMQADVLVANILAGPLVSLAPQLSGLVRPGGLLALSGILAEQGEEVAAAYAADFELDPIVVRDGWVRISGRRR.

Residues T144, G165, D187, and N229 each coordinate S-adenosyl-L-methionine.

Belongs to the methyltransferase superfamily. PrmA family.

It localises to the cytoplasm. It catalyses the reaction L-lysyl-[protein] + 3 S-adenosyl-L-methionine = N(6),N(6),N(6)-trimethyl-L-lysyl-[protein] + 3 S-adenosyl-L-homocysteine + 3 H(+). In terms of biological role, methylates ribosomal protein L11. The chain is Ribosomal protein L11 methyltransferase from Pseudomonas putida (strain W619).